The following is a 338-amino-acid chain: Nodulation outer protein L (338 aa).

Positions 1–14 are enriched in polar residues; the sequence is MDINSTSPLNASPQ. Disordered stretches follow at residues 1–48, 85–158, 187–209, and 230–259; these read MDIN…LPQV, TRER…DLET, SPAP…PHAR, and PQAG…SSAG. The segment covering 85–97 has biased composition (basic and acidic residues); it reads TRERSPHPSEQRP. Residues 126-138 are compositionally biased toward polar residues; that stretch reads VGPSRSGPSQAGL. Positions 242–258 are enriched in polar residues; it reads SGPSQARPSHAWPSSSA.

The protein localises to the secreted. Functionally, putative symbiotic effector that modulates nodulation in legumes. When delivered into the plant cell, modulates the activity of signal transduction pathways that culminate in activation of PR proteins. In Sinorhizobium fredii (strain NBRC 101917 / NGR234), this protein is Nodulation outer protein L (nopL).